A 352-amino-acid chain; its full sequence is Isoflavone-7-O-methyltransferase 8 (352 aa).

A substrate-binding site is contributed by 118–127 (VLDPTLSGSY). Residues Gly-196, Asp-219, Asp-239, Met-240, and Lys-253 each coordinate S-adenosyl-L-methionine. Catalysis depends on His-257, which acts as the Proton acceptor.

Belongs to the class I-like SAM-binding methyltransferase superfamily. Cation-independent O-methyltransferase family. COMT subfamily. In terms of assembly, homodimer.

It catalyses the reaction a 7-hydroxyisoflavone + S-adenosyl-L-methionine = a 7-methoxyisoflavone + S-adenosyl-L-homocysteine + H(+). Its pathway is phytoalexin biosynthesis; medicarpin biosynthesis. Transfers a methyl group to 7-hydroxyls of the isoflavones daidzein, genistein and 6,7,4'-trihydroxyisoflavone. Can also methylate (+)6a-hydroxymaackiain with lower efficiency. This is Isoflavone-7-O-methyltransferase 8 from Medicago sativa (Alfalfa).